A 216-amino-acid polypeptide reads, in one-letter code: Phosphoserine phosphatase (216 aa).

Asp-10 (nucleophile) is an active-site residue. Mg(2+)-binding residues include Asp-10 and Asp-12. Asp-12 serves as the catalytic Proton donor. Substrate is bound by residues Glu-19, Arg-55, 98-99, and Lys-143; that span reads SG. Asp-166 provides a ligand contact to Mg(2+). Asn-169 contributes to the substrate binding site.

Belongs to the HAD-like hydrolase superfamily. SerB family. Requires Mg(2+) as cofactor.

The enzyme catalyses O-phospho-L-serine + H2O = L-serine + phosphate. It carries out the reaction O-phospho-D-serine + H2O = D-serine + phosphate. Its pathway is amino-acid biosynthesis; L-serine biosynthesis; L-serine from 3-phospho-D-glycerate: step 3/3. The chain is Phosphoserine phosphatase from Lactococcus lactis subsp. lactis (strain IL1403) (Streptococcus lactis).